Consider the following 256-residue polypeptide: 5-keto-4-deoxy-D-glucarate aldolase (256 aa).

The Proton acceptor role is filled by H50. Position 151 (Q151) interacts with substrate. E153 contributes to the Mg(2+) binding site. 2 residues coordinate substrate: S178 and D179. D179 lines the Mg(2+) pocket.

Belongs to the HpcH/HpaI aldolase family. KDGluc aldolase subfamily. Homohexamer; trimer of dimers. Requires Mg(2+) as cofactor.

The catalysed reaction is 5-dehydro-4-deoxy-D-glucarate = 2-hydroxy-3-oxopropanoate + pyruvate. The enzyme catalyses 2-dehydro-3-deoxy-D-glucarate = 2-hydroxy-3-oxopropanoate + pyruvate. Its pathway is carbohydrate acid metabolism; galactarate degradation; D-glycerate from galactarate: step 2/3. In terms of biological role, catalyzes the reversible retro-aldol cleavage of both 5-keto-4-deoxy-D-glucarate and 2-keto-3-deoxy-D-glucarate to pyruvate and tartronic semialdehyde. This Salmonella paratyphi C (strain RKS4594) protein is 5-keto-4-deoxy-D-glucarate aldolase.